We begin with the raw amino-acid sequence, 98 residues long: NADH-ubiquinone oxidoreductase chain 4L (98 aa).

The next 3 helical transmembrane spans lie at 2–22 (MMAV…TLMF), 26–46 (LMST…ITTI), and 59–79 (IPIV…ALLV).

Belongs to the complex I subunit 4L family. In terms of assembly, core subunit of respiratory chain NADH dehydrogenase (Complex I) which is composed of 45 different subunits.

Its subcellular location is the mitochondrion inner membrane. It catalyses the reaction a ubiquinone + NADH + 5 H(+)(in) = a ubiquinol + NAD(+) + 4 H(+)(out). Its function is as follows. Core subunit of the mitochondrial membrane respiratory chain NADH dehydrogenase (Complex I) which catalyzes electron transfer from NADH through the respiratory chain, using ubiquinone as an electron acceptor. Part of the enzyme membrane arm which is embedded in the lipid bilayer and involved in proton translocation. The sequence is that of NADH-ubiquinone oxidoreductase chain 4L (MT-ND4L) from Phodopus sungorus (Striped hairy-footed hamster).